Consider the following 435-residue polypeptide: Protoheme IX farnesyltransferase, mitochondrial (435 aa).

The transit peptide at 1 to 35 (MPALCATYLIHSGNLRACLRIVPLTKPSVVIAYRH) directs the protein to the mitochondrion. Transmembrane regions (helical) follow at residues 135–155 (VLVM…ATVL), 157–177 (LLSL…INMG), 212–232 (GVIG…LLGA), 250–270 (IINT…GWAA), 324–344 (VALR…YYGI), and 401–421 (FWVS…HKKG).

This sequence belongs to the UbiA prenyltransferase family.

Its subcellular location is the mitochondrion membrane. Functionally, converts protoheme IX and farnesyl diphosphate to heme O. The chain is Protoheme IX farnesyltransferase, mitochondrial (COX10) from Eremothecium gossypii (strain ATCC 10895 / CBS 109.51 / FGSC 9923 / NRRL Y-1056) (Yeast).